The following is a 710-amino-acid chain: MLKQVFETTDLKNSFQVEIGTYARNVDPSVLIRFQDTVVLTTTVFSNKKNNFDFLPLTVIYQEKFYAAGKIPGSFLRREGRSTDHEILSSRLIDRSLRPLFPKEFRQEIQVINTVLSSNPDFKSEIASILGSSLSLLISEIPFFEPVAGVYVAYIQNQFVINPNAQQLTNSPLHLLVAGTKKNVVMIEAHASEVSEEMFLEAIVFAHEYIKKLCLFQEDVQKKVGQTKKLIDLDAELQSLEKEFNEQYHEQTRTLVANVFEQDQKNDLQVFKKKILAKAQQKAFVKTIDQITFFDVEEQKNYLLLIENLFQKLFNQEMRNYIIKNKKRPDKRTLEEVRNLDSQIDLLPRPHGSALFTRGQTQSLAVVTLGTLSESKIIDDLSGESNKRFMLHYNFPPFAVGSIGRYAAPSRREIGHGNLAEKAILPLLPEENDFPYAIRVVSEILESNGSSSQATVCATSMSLMAAGVPLKRAVSGIAMGLFMDSKTNEYVILSDIQGLEDHIGDMDLKIAGSDKGITALQMDLKIEGISQAILKQAFFQAKKGRLHILEHMNKTIASPRKEMSQYAPKVQMFQIKPEKIRDVIGSAGKIINQIIENHDGVKIDIEQDGRIFVMHSNLETVKQAILFIKNLIQDAEVNSIYHAHISRFLNDKAGNILGAFAQVSPSIEGLIRFSKAKKENDVVKIGDKVLVKCVKINERGRIDFVLISKK.

Mg(2+)-binding residues include D501 and D507. The KH domain maps to 568 to 628 (PKVQMFQIKP…ETVKQAILFI (61 aa)). Positions 638–710 (NSIYHAHISR…RIDFVLISKK (73 aa)) constitute an S1 motif domain.

The protein belongs to the polyribonucleotide nucleotidyltransferase family. Requires Mg(2+) as cofactor.

Its subcellular location is the cytoplasm. It catalyses the reaction RNA(n+1) + phosphate = RNA(n) + a ribonucleoside 5'-diphosphate. In terms of biological role, involved in mRNA degradation. Catalyzes the phosphorolysis of single-stranded polyribonucleotides processively in the 3'- to 5'-direction. The polypeptide is Polyribonucleotide nucleotidyltransferase (Phytoplasma australiense).